The chain runs to 791 residues: Calcium-transporting ATPase CtpE (791 aa).

3 consecutive transmembrane segments (helical) span residues 53-73 (LFVI…LLII), 213-233 (ILQF…YTQL), and 252-272 (VPMV…VGVV). The active-site 4-aspartylphosphate intermediate is aspartate 299. Mg(2+)-binding residues include aspartate 299, threonine 301, and aspartate 530. The next 6 helical transmembrane spans lie at 596–616 (VYSV…KIFG), 627–647 (IHVT…LSLA), 664–684 (AALP…LVAY), 697–717 (ASTA…AVVA), 725–745 (VLLV…PLAQ), and 757–777 (VTSV…VLWW).

Belongs to the cation transport ATPase (P-type) (TC 3.A.3) family.

Its subcellular location is the cell membrane. The enzyme catalyses Ca(2+)(in) + ATP + H2O = Ca(2+)(out) + ADP + phosphate + H(+). In terms of biological role, P-type ATPase involved in specific uptake of calcium. Essential for growth and maintenance of cell surface integrity under Ca(2+)-deficient conditions. The polypeptide is Calcium-transporting ATPase CtpE (Mycolicibacterium smegmatis (strain ATCC 700084 / mc(2)155) (Mycobacterium smegmatis)).